The following is a 174-amino-acid chain: Large ribosomal subunit protein uL10 (174 aa).

Belongs to the universal ribosomal protein uL10 family. In terms of assembly, part of the ribosomal stalk of the 50S ribosomal subunit. The N-terminus interacts with L11 and the large rRNA to form the base of the stalk. The C-terminus forms an elongated spine to which L12 dimers bind in a sequential fashion forming a multimeric L10(L12)X complex.

Functionally, forms part of the ribosomal stalk, playing a central role in the interaction of the ribosome with GTP-bound translation factors. This chain is Large ribosomal subunit protein uL10, found in Anaeromyxobacter sp. (strain Fw109-5).